The sequence spans 341 residues: DNA-directed RNA polymerase subunit alpha (341 aa).

The interval 1-233 (MVREEVAGST…DLFLPFLHAE (233 aa)) is alpha N-terminal domain (alpha-NTD). The segment at 269–341 (IPLNCIFIDQ…IDLLKNKLSF (73 aa)) is alpha C-terminal domain (alpha-CTD).

It belongs to the RNA polymerase alpha chain family. In plastids the minimal PEP RNA polymerase catalytic core is composed of four subunits: alpha, beta, beta', and beta''. When a (nuclear-encoded) sigma factor is associated with the core the holoenzyme is formed, which can initiate transcription.

Its subcellular location is the plastid. It is found in the chloroplast. It catalyses the reaction RNA(n) + a ribonucleoside 5'-triphosphate = RNA(n+1) + diphosphate. Its function is as follows. DNA-dependent RNA polymerase catalyzes the transcription of DNA into RNA using the four ribonucleoside triphosphates as substrates. This chain is DNA-directed RNA polymerase subunit alpha, found in Lolium perenne (Perennial ryegrass).